The sequence spans 527 residues: Endogenous retrovirus group FC1 member 1 Env polyprotein (527 aa).

The interval 1–411 (MNSPCDRLQQ…EPRPQNKSKW (411 aa)) is surface protein. The CXXC signature appears at 280-283 (CFLC). Residues 412 to 432 (AIFLPLVLGISLASSLVASGL) are fusion peptide. Positions 412–527 (AIFLPLVLGI…LKKKKSSKRS (116 aa)) are transmembrane protein. The CKS-17 motif lies at 477–493 (AQNRQALDLLMAEKGRT). C494 and C501 are disulfide-bonded. A CX6CC motif is present at residues 494–502 (CLFLQEECC).

It belongs to the gamma type-C retroviral envelope protein family. HERV class-I F(c)2 env subfamily. In terms of processing, the CXXC motif is highly conserved across a broad range of retroviral envelope proteins. It is thought to participate in the formation of a labile disulfide bond possibly with the CX6CC motif present in the transmembrane domain. As to expression, low expression in skin and testis.

It is found in the virion. In terms of biological role, retroviral envelope proteins mediate receptor recognition and membrane fusion during early infection. Endogenous envelope proteins may have kept, lost or modified their original function during evolution. This endogenous envelope protein has lost its original fusogenic properties. This chain is Endogenous retrovirus group FC1 member 1 Env polyprotein (ERVFC1-1), found in Homo sapiens (Human).